A 474-amino-acid chain; its full sequence is Serine/threonine-protein kinase VRK3 (474 aa).

Positions 41 to 58 are enriched in polar residues; sequence HVSSFQGSKRGLNSSFET. Residues 41–152 are disordered; sequence HVSSFQGSKR…SRVTTSLEAL (112 aa). The Nuclear localization signal signature appears at 49–64; the sequence is KRGLNSSFETSPKKVK. Serine 54, serine 55, serine 59, serine 82, serine 83, and serine 90 each carry phosphoserine. Residues 88-101 show a composition bias toward low complexity; the sequence is TLSSSERSKGSGSR. Residues 107–149 show a composition bias toward polar residues; the sequence is SSPQKTRKSPQVTRGSPQKTSCSPQKTRQSPQTLKRSRVTTSL. At serine 108 the chain carries Phosphoserine; by CDK5. Residues serine 115 and serine 122 each carry the phosphoserine modification. The Protein kinase domain maps to 166–457; that stretch reads WKLKSFQTRD…MLRNNLEALL (292 aa).

This sequence belongs to the protein kinase superfamily. CK1 Ser/Thr protein kinase family. VRK subfamily. In terms of assembly, interacts with DUSP3. Interacts with RAN. Interacts with HSP70/HSPA1A. In terms of processing, phosphorylated at Ser-108 by CDK5; leading to protection of the cell against H2O2-induced apoptosis. Post-translationally, ubiquitinated by RNF144A.

The protein resides in the nucleus. It is found in the cytoplasm. It carries out the reaction L-seryl-[protein] + ATP = O-phospho-L-seryl-[protein] + ADP + H(+). In terms of biological role, plays a role in the regulation of the cell cycle by phosphorylating the nuclear envelope protein barrier-to-autointegration factor/BAF that is required for disassembly and reassembly, respectively, of the nuclear envelope during mitosis. Under normal physiological conditions, negatively regulates ERK activity along with VHR/DUSP3 phosphatase in the nucleus, causing timely and transient action of ERK. Stress conditions activate CDK5 which phosphorylates VRK3 to increase VHR phosphatase activity and suppress prolonged ERK activation that causes cell death. For example, upon glutamate induction, promotes nuclear localization of HSP70/HSPA1A to inhibit ERK activation via VHR/DUSP3 phosphatase. The sequence is that of Serine/threonine-protein kinase VRK3 (VRK3) from Homo sapiens (Human).